The sequence spans 378 residues: Heat-inducible transcription repressor HrcA (378 aa).

Belongs to the HrcA family.

Functionally, negative regulator of class I heat shock genes (grpE-dnaK-dnaJ and groELS operons). Prevents heat-shock induction of these operons. This chain is Heat-inducible transcription repressor HrcA, found in Synechocystis sp. (strain ATCC 27184 / PCC 6803 / Kazusa).